A 416-amino-acid polypeptide reads, in one-letter code: Nonsense-mediated decay protein 4 (416 aa).

Disordered stretches follow at residues 1 to 21, 195 to 218, and 356 to 393; these read MSLY…NYHD, QHPI…YNNS, and DRPS…ANGD. Residues 12 to 21 are compositionally biased toward basic and acidic residues; it reads EARKNSNYHD. A compositionally biased stretch (basic residues) spans 360-375; the sequence is KSKNKNKNKNTKKSTK.

It is found in the cytoplasm. Its function is as follows. Involved in nonsense-mediated decay of mRNAs containing premature stop codons. This is Nonsense-mediated decay protein 4 (NMD4) from Debaryomyces hansenii (strain ATCC 36239 / CBS 767 / BCRC 21394 / JCM 1990 / NBRC 0083 / IGC 2968) (Yeast).